The primary structure comprises 325 residues: MSRLALNRYSRCFSRLKTLTTPLFFSSSAASNRDGDYQIGPPPIRVGLTESAGRAVFATRKIGAGDLIHTAKPVVACPSLLKLDSVCYLCLKKLMGSAKFEDRGVSYCSQECQENSKGFLDVETRADWSSFDDYCRTHNFKYPLMVKRLCCMIISGARPADCLDILQPAVLSSEMISKIEDGYGLLWNAFRKANFKDDDVAFLTKQWYTAILARIRINAFRIDLVGGSCGEDLLSLAAASVEGEGAVGHAVYMLPSFYNHDCDPNAHIIWLHNADARLNTLRDVEEGEELRICYIDASMGYEARQTILSQGFGFLCNCLRCQSTD.

Positions methionine 1–alanine 30 are cleaved as a signal peptide. Residues proline 42–isoleucine 295 enclose the SET domain.

This sequence belongs to the class V-like SAM-binding methyltransferase superfamily. Histone-lysine methyltransferase family. TRX/MLL subfamily.

It localises to the nucleus. It catalyses the reaction L-lysyl-[histone] + S-adenosyl-L-methionine = N(6)-methyl-L-lysyl-[histone] + S-adenosyl-L-homocysteine + H(+). Functionally, histone methyltransferase. The protein is Histone-lysine N-methyltransferase ATXR4 (ATXR4) of Arabidopsis thaliana (Mouse-ear cress).